The following is a 437-amino-acid chain: Putative galacturan 1,4-alpha-galacturonidase A (437 aa).

The N-terminal stretch at 1 to 20 (MKLSGSSALLLLGFGLLGHA) is a signal peptide. Residues Asn30, Asn101, Asn110, Asn161, Asn196, and Asn203 are each glycosylated (N-linked (GlcNAc...) asparagine). A PbH1 1 repeat occupies 222–243 (SDHVTITNWVYEGGDDAVAFKP). Asp236 acts as the Proton donor in catalysis. N-linked (GlcNAc...) asparagine glycans are attached at residues Asn244, Asn252, Asn278, Asn324, Asn352, Asn371, Asn382, and Asn387. 3 PbH1 repeats span residues 245–265 (STNIHVENVTVYGGPGIAFGS), 276–302 (VENITVKNANFQPSSQRAMNSGIYFKS), and 322–343 (VRNVTVEDITFKDVQLPIYIDT). A disulfide bond links Cys396 and Cys402.

It belongs to the glycosyl hydrolase 28 family.

Its subcellular location is the secreted. It catalyses the reaction [(1-&gt;4)-alpha-D-galacturonosyl](n) + H2O = alpha-D-galacturonate + [(1-&gt;4)-alpha-D-galacturonosyl](n-1). In terms of biological role, specific in hydrolyzing the terminal glycosidic bond of polygalacturonic acid and oligogalacturonates. This chain is Putative galacturan 1,4-alpha-galacturonidase A (rgxA), found in Aspergillus flavus (strain ATCC 200026 / FGSC A1120 / IAM 13836 / NRRL 3357 / JCM 12722 / SRRC 167).